The primary structure comprises 912 residues: DNA (cytosine-5)-methyltransferase 3A (912 aa).

Disordered stretches follow at residues 1 to 178 and 221 to 286; these read MPAM…GWES and IAGM…EYED. Over residues 17-40 the composition is skewed to basic and acidic residues; the sequence is AEREEDRKDGEEQEEPRGKEERQE. Residues 47–57 show a composition bias toward basic residues; sequence KVGRPGRKRKH. Over residues 74–83 the composition is skewed to polar residues; that stretch reads KSPSMAQDSG. The residue at position 105 (Ser105) is a Phosphoserine. Low complexity predominate over residues 113-128; that stretch reads GAPAEGEGAAETLPEA. Phosphothreonine is present on Thr124. Residues 149 to 167 show a composition bias toward basic and acidic residues; the sequence is AGKEQKETNIESMKMEGSR. Lys162 is covalently cross-linked (Glycyl lysine isopeptide (Lys-Gly) (interchain with G-Cter in SUMO2)). Position 171 is an omega-N-methylarginine (Arg171). An interaction with DNMT1 and DNMT3B region spans residues 199-403; it reads SKRKRDEWLA…DTAKAVEVQN (205 aa). Ser243 and Ser255 each carry phosphoserine. Residues 246 to 260 show a composition bias toward polar residues; it reads AVQQPTDPASPTVAT. Thr261 carries the post-translational modification Phosphothreonine. Ser267 is modified (phosphoserine). A compositionally biased stretch (basic and acidic residues) spans 269-279; that stretch reads AGDKNATKAGD. The PWWP domain occupies 292–350; it reads IGELVWGKLRGFSWWPGRIVSWWMTGRSRAAEGTRWVMWFGDGKFSVVCVEKLMPLSSF. Phosphoserine is present on residues Ser390 and Ser393. Residues 447 to 466 are disordered; sequence AYAPPPPAKKPRKSTAEKPK. The ADD domain occupies 482-614; the sequence is EVRQKCRNIE…LQMFFANNHD (133 aa). Residues 493–523 form a GATA-type; atypical zinc finger; that stretch reads ICISCGSLNVTLEHPLFVGGMCQNCKNCFLE. The tract at residues 494–586 is interaction with the PRC2/EED-EZH2 complex; that stretch reads CISCGSLNVT…KEDPWNCYMC (93 aa). Residues 534–590 form a PHD-type; atypical zinc finger; the sequence is QSYCTICCGGREVLMCGNNNCCRCFCVECVDLLVGPGAAQAAIKEDPWNCYMCGHKG. In terms of domain architecture, SAM-dependent MTase C5-type spans 634–912; the sequence is IRVLSLFDGI…APLKEYFACV (279 aa). Residues 641–645, Glu664, and 686–688 contribute to the S-adenosyl-L-methionine site; these read DGIAT and DVR. The active site involves Cys710. Cys710 carries the post-translational modification S-methylcysteine; by autocatalysis. 891-893 is an S-adenosyl-L-methionine binding site; it reads RSW.

The protein belongs to the class I-like SAM-binding methyltransferase superfamily. C5-methyltransferase family. In terms of assembly, heterotetramer composed of 1 DNMT3A homodimer and 2 DNMT3L subunits (DNMT3L-DNMT3A-DNMT3A-DNMT3L). Interacts with UBC9, PIAS1 and PIAS2. Binds the ZBTB18 transcriptional repressor. Interacts with SETDB1. Associates with HDAC1 through its ADD domain. Interacts with UHRF1. Interacts with DNMT1 and DNMT3B. Interacts with the PRC2/EED-EZH2 complex. Interacts with MPHOSPH8. Interacts with histone H3 that is not methylated at 'Lys-4' (H3K4). Interacts with SPOCD1. Interacts with ZNF263; recruited to the SIX3 promoter along with other proteins involved in chromatin modification and transcriptional corepression where it contributes to transcriptional repression. Post-translationally, sumoylated; sumoylation disrupts the ability to interact with histone deacetylases (HDAC1 and HDAC2) and repress transcription. Auto-methylated at Cys-710: auto-methylation takes place in absence of DNA substrate and inactivates the DNA methyltransferase activity. Inactivation by auto-methylation may be used to inactivate unused DNA methyltransferases in the cell. In terms of tissue distribution, highly expressed in fetal tissues, skeletal muscle, heart, peripheral blood mononuclear cells, kidney, and at lower levels in placenta, brain, liver, colon, spleen, small intestine and lung.

It is found in the nucleus. Its subcellular location is the chromosome. It localises to the cytoplasm. The enzyme catalyses a 2'-deoxycytidine in DNA + S-adenosyl-L-methionine = a 5-methyl-2'-deoxycytidine in DNA + S-adenosyl-L-homocysteine + H(+). It carries out the reaction L-cysteinyl-[protein] + S-adenosyl-L-methionine = S-methyl-L-cysteinyl-[protein] + S-adenosyl-L-homocysteine + H(+). Its activity is regulated as follows. Activated by binding to the regulatory factor DNMT3L. Auto-methylation at Cys-710 in absence of DNA inactivates the DNA methyltransferase activity. Its function is as follows. Required for genome-wide de novo methylation and is essential for the establishment of DNA methylation patterns during development. DNA methylation is coordinated with methylation of histones. It modifies DNA in a non-processive manner and also methylates non-CpG sites. May preferentially methylate DNA linker between 2 nucleosomal cores and is inhibited by histone H1. Plays a role in paternal and maternal imprinting. Required for methylation of most imprinted loci in germ cells. Acts as a transcriptional corepressor for ZBTB18. Recruited to trimethylated 'Lys-36' of histone H3 (H3K36me3) sites. Can actively repress transcription through the recruitment of HDAC activity. Also has weak auto-methylation activity on Cys-710 in absence of DNA. The polypeptide is DNA (cytosine-5)-methyltransferase 3A (DNMT3A) (Homo sapiens (Human)).